The sequence spans 227 residues: Isopentenyl-diphosphate Delta-isomerase 1 (227 aa).

Position 36 (K36) interacts with substrate. Residues H40 and H51 each coordinate Mg(2+). Residues 49–199 form the Nudix hydrolase domain; sequence LLHRAFSVFL…EIKITPWFKI (151 aa). 2 residues coordinate substrate: R70 and K74. Residue C86 is part of the active site. S87 is a binding site for substrate. Mg(2+) contacts are provided by E146 and E148. E148 is a catalytic residue. K176 is modified (N6-acetyllysine). The short motif at 225–227 is the Microbody targeting signal element; the sequence is YRI.

This sequence belongs to the IPP isomerase type 1 family. Monomer. Mg(2+) serves as cofactor.

The protein localises to the peroxisome. It catalyses the reaction isopentenyl diphosphate = dimethylallyl diphosphate. The protein operates within isoprenoid biosynthesis; dimethylallyl diphosphate biosynthesis; dimethylallyl diphosphate from isopentenyl diphosphate: step 1/1. Catalyzes the 1,3-allylic rearrangement of the homoallylic substrate isopentenyl (IPP) to its highly electrophilic allylic isomer, dimethylallyl diphosphate (DMAPP). In Pongo abelii (Sumatran orangutan), this protein is Isopentenyl-diphosphate Delta-isomerase 1 (IDI1).